Reading from the N-terminus, the 292-residue chain is Ribosomal RNA small subunit methyltransferase A (292 aa).

S-adenosyl-L-methionine-binding residues include asparagine 28, leucine 30, glycine 55, glutamate 76, aspartate 101, and asparagine 126.

It belongs to the class I-like SAM-binding methyltransferase superfamily. rRNA adenine N(6)-methyltransferase family. RsmA subfamily.

Its subcellular location is the cytoplasm. It catalyses the reaction adenosine(1518)/adenosine(1519) in 16S rRNA + 4 S-adenosyl-L-methionine = N(6)-dimethyladenosine(1518)/N(6)-dimethyladenosine(1519) in 16S rRNA + 4 S-adenosyl-L-homocysteine + 4 H(+). Its function is as follows. Specifically dimethylates two adjacent adenosines (A1518 and A1519) in the loop of a conserved hairpin near the 3'-end of 16S rRNA in the 30S particle. May play a critical role in biogenesis of 30S subunits. In Bacillus mycoides (strain KBAB4) (Bacillus weihenstephanensis), this protein is Ribosomal RNA small subunit methyltransferase A.